We begin with the raw amino-acid sequence, 131 residues long: Peptidyl-prolyl cis-trans isomerase NIMA-interacting 4 (131 aa).

The segment at 1–25 (MPPKGKSGSGKGGKGKAASGSESSE) is necessary for nuclear localization and DNA-binding. Residues 1–37 (MPPKGKSGSGKGGKGKAASGSESSEKKAQGPKGGGNA) form a disordered region. A necessary for association with the pre-rRNP complexes region spans residues 1 to 41 (MPPKGKSGSGKGGKGKAASGSESSEKKAQGPKGGGNAVKVR). Position 19 is a phosphoserine; by CK2 (Ser19). One can recognise a PpiC domain in the interval 35–129 (GNAVKVRHIL…FGYHIIMVEG (95 aa)).

The protein belongs to the PpiC/parvulin rotamase family. PIN4 subfamily. As to quaternary structure, found in pre-ribosomal ribonucleoprotein (pre-rRNP) complexes. In terms of processing, phosphorylated. Phosphorylation occurs both in the nucleus and the cytoplasm. Phosphorylation at Ser-19 does not affect its PPIase activity but is required for nuclear localization, and the dephosphorylation is a prerequisite for the binding to DNA. The unphosphorylated form associates with the pre-rRNP complexes in the nucleus.

It localises to the nucleus. The protein resides in the nucleolus. It is found in the cytoplasm. Its subcellular location is the cytoskeleton. The protein localises to the spindle. It catalyses the reaction [protein]-peptidylproline (omega=180) = [protein]-peptidylproline (omega=0). Functionally, involved as a ribosomal RNA processing factor in ribosome biogenesis. Binds to tightly bent AT-rich stretches of double-stranded DNA. The protein is Peptidyl-prolyl cis-trans isomerase NIMA-interacting 4 (PIN4) of Bos taurus (Bovine).